We begin with the raw amino-acid sequence, 200 residues long: Phospholipase A2 inhibitor LNF2 (200 aa).

The first 19 residues, 1–19 (MKSLHTICLLFIFVARGNS), serve as a signal peptide directing secretion. Intrachain disulfides connect C22–C46, C25–C32, C39–C67, C73–C94, C95–C100, C118–C143, C136–C165, and C169–C191. N176 is a glycosylation site (N-linked (GlcNAc...) asparagine).

Belongs to the CNF-like-inhibitor family. In terms of assembly, occurs as a mixture of oligomers. Tetrameric arrangement appears to be the predominant quaternary structure. In terms of tissue distribution, expressed by the liver.

It is found in the secreted. In terms of biological role, inhibits the enzymatic activity of phospholipase A2 (PA2). This Lachesis muta muta (Bushmaster) protein is Phospholipase A2 inhibitor LNF2.